The following is an 86-amino-acid chain: MANIKSQMKRIRTNEAARKRNQSVKSALRTAIRSFREAAEAGDKDKAAERLQFASRKLDKAASKGVIHPNQAANKKSALALAFNKL.

Residues 1–25 are disordered; sequence MANIKSQMKRIRTNEAARKRNQSVK.

It belongs to the bacterial ribosomal protein bS20 family.

Functionally, binds directly to 16S ribosomal RNA. The protein is Small ribosomal subunit protein bS20 of Nocardia farcinica (strain IFM 10152).